The primary structure comprises 118 residues: Large ribosomal subunit protein uL18 (118 aa).

It belongs to the universal ribosomal protein uL18 family. As to quaternary structure, part of the 50S ribosomal subunit; part of the 5S rRNA/L5/L18/L25 subcomplex. Contacts the 5S and 23S rRNAs.

Its function is as follows. This is one of the proteins that bind and probably mediate the attachment of the 5S RNA into the large ribosomal subunit, where it forms part of the central protuberance. This is Large ribosomal subunit protein uL18 from Rickettsia prowazekii (strain Madrid E).